A 191-amino-acid chain; its full sequence is Putative resolvase L103 (191 aa).

The segment at residues 11–30 is a DNA-binding region (H-T-H motif); it reads LEVLKVHYQTLYRMEEKGLI. The Resolvase/invertase-type recombinase catalytic domain maps to 59 to 191; sequence KGICYCRVSS…KKSGKLKAKK (133 aa). The stretch at 65–91 forms a coiled coil; sequence RVSSKKQIKDLNRQVEYMEKNYPEYEI. Residue serine 67 is the O-(5'-phospho-DNA)-serine intermediate of the active site.

The protein belongs to the site-specific recombinase resolvase family.

Functionally, resolvase catalyzes the resolution (a site-specific recombination) of the cointegrated replicon to yield the final transposition products. This Acanthamoeba polyphaga (Amoeba) protein is Putative resolvase L103.